We begin with the raw amino-acid sequence, 352 residues long: Rhodopsin (352 aa).

The Extracellular segment spans residues 1–36; it reads MNGTEGPFFYIPMVNTTGIVRSPYEYPQYYLVNPAA. N-linked (GlcNAc...) asparagine glycans are attached at residues asparagine 2 and asparagine 15. The chain crosses the membrane as a helical span at residues 37–61; it reads YAALGAYMFFLILTGFPINFLTLYV. At 62–73 the chain is on the cytoplasmic side; it reads TLEHKKLRTALN. Residues 74-96 form a helical membrane-spanning segment; the sequence is LILLNLAVADLFMVFGGFTTTMY. The Extracellular portion of the chain corresponds to 97–110; the sequence is TSMHGYFVLGRLGC. A disulfide bridge connects residues cysteine 110 and cysteine 187. The chain crosses the membrane as a helical span at residues 111-133; it reads NVEGFFATLGGEIALWSLVVLAV. The 'Ionic lock' involved in activated form stabilization signature appears at 134–136; sequence ERW. Over 134-152 the chain is Cytoplasmic; the sequence is ERWVVVCKPISNFRFTENH. A helical transmembrane segment spans residues 153 to 173; that stretch reads AIMGVAFSWIMAATCAVPPLV. Over 174 to 202 the chain is Extracellular; it reads GWSRYIPEGMQCSCGVDYYTRAEGFNNES. The chain crosses the membrane as a helical span at residues 203-224; sequence FVIYMFIVHFLAPLIVIFFCYG. Over 225 to 252 the chain is Cytoplasmic; sequence RLLCAVKEAAAAQQESETTQRAEREVTR. Residues 253-274 form a helical membrane-spanning segment; that stretch reads MVIIMVIGFLTSWLPYASVAWY. Residues 275-286 are Extracellular-facing; the sequence is IFTHQGTEFGPL. The chain crosses the membrane as a helical span at residues 287 to 308; that stretch reads FMTIPAFFAKSSALYNPMIYIC. Lysine 296 carries the N6-(retinylidene)lysine modification. The Cytoplasmic portion of the chain corresponds to 309–352; it reads MNKQFRHCMITTLCCGKNPFEEEEGASTTKTEASSVSSSSVSPA. Residues cysteine 322 and cysteine 323 are each lipidated (S-palmitoyl cysteine). Residues 331-352 form a disordered region; the sequence is EEGASTTKTEASSVSSSSVSPA. Residues 342 to 352 are compositionally biased toward low complexity; that stretch reads SSVSSSSVSPA.

It belongs to the G-protein coupled receptor 1 family. Opsin subfamily. Post-translationally, phosphorylated on some or all of the serine and threonine residues present in the C-terminal region. In terms of processing, contains one covalently linked retinal chromophore.

The protein localises to the membrane. It is found in the cell projection. It localises to the cilium. The protein resides in the photoreceptor outer segment. Functionally, photoreceptor required for image-forming vision at low light intensity. While most salt water fish species use retinal as chromophore, most freshwater fish use 3-dehydroretinal, or a mixture of retinal and 3-dehydroretinal. Light-induced isomerization of 11-cis to all-trans retinal triggers a conformational change that activates signaling via G-proteins. Subsequent receptor phosphorylation mediates displacement of the bound G-protein alpha subunit by arrestin and terminates signaling. This Pomatoschistus minutus (Sand goby) protein is Rhodopsin (rho).